Here is a 360-residue protein sequence, read N- to C-terminus: Decorin (360 aa).

Positions 1 to 16 (MKATIIFFLVAQVSWA) are cleaved as a signal peptide. Positions 17–30 (GPFQQKGLFDFMLE) are excised as a propeptide. O-linked (Xyl...) (glycosaminoglycan) serine glycosylation is present at Ser34. Cystine bridges form between Cys55/Cys61 and Cys59/Cys68. LRR repeat units follow at residues 74–94 (EKVPKDLPPDTALLDLQNNKI), 95–118 (TEIKDGDFKNLKNLHTLILINNKI), 119–142 (SKISPGAFAPLVKLERLYLSKNQL), 143–163 (KELPEKMPKTLQELRVHENEI), 164–187 (TKVRKSVFNGLNQMIVVELGTNPL), 188–213 (KSSGIENGAFQGMKKLSYIRIADTNI), 214–234 (TTIPQGLPPSLTELHLDGNKI), 235–258 (TKVDAASLKGLNNLAKLGLSFNSI), 259–282 (SAVDNGSLANTPHLRELHLNNNKL), 283–305 (VKVPGGLADHKYIQVVYLHNNNI), 306–335 (SAIGSNDFCPPGYNTKKASYSGVSLFSNPV), and 336–360 (QYWEIQPSTFRCVYVRAAVQLGNYK). The N-linked (GlcNAc...) asparagine glycan is linked to Asn212. Asn263 and Asn304 each carry an N-linked (GlcNAc...) asparagine glycan. An intrachain disulfide couples Cys314 to Cys347.

Belongs to the small leucine-rich proteoglycan (SLRP) family. SLRP class I subfamily. Binds to type I and type II collagen, fibronectin and TGF-beta. Forms a ternary complex with MFAP2 and ELN. Interacts with DPT. The attached glycosaminoglycan chain can be either chondroitin sulfate or dermatan sulfate depending upon the tissue of origin.

Its subcellular location is the secreted. It localises to the extracellular space. It is found in the extracellular matrix. In terms of biological role, may affect the rate of fibrils formation. The sequence is that of Decorin (DCN) from Ovis aries (Sheep).